Reading from the N-terminus, the 286-residue chain is NAD kinase (286 aa).

The active-site Proton acceptor is the Asp74. Residues 74-75 (DG), 148-149 (ND), Asp178, Ala186, 189-194 (TAYNLS), and Gln244 each bind NAD(+).

It belongs to the NAD kinase family. Requires a divalent metal cation as cofactor.

The protein localises to the cytoplasm. It carries out the reaction NAD(+) + ATP = ADP + NADP(+) + H(+). In terms of biological role, involved in the regulation of the intracellular balance of NAD and NADP, and is a key enzyme in the biosynthesis of NADP. Catalyzes specifically the phosphorylation on 2'-hydroxyl of the adenosine moiety of NAD to yield NADP. The polypeptide is NAD kinase (Campylobacter jejuni subsp. jejuni serotype O:2 (strain ATCC 700819 / NCTC 11168)).